Here is a 126-residue protein sequence, read N- to C-terminus: UPF0538 protein C2orf76 homolog (126 aa).

This sequence belongs to the UPF0538 family.

This chain is UPF0538 protein C2orf76 homolog, found in Mus musculus (Mouse).